A 320-amino-acid polypeptide reads, in one-letter code: tRNA U34 carboxymethyltransferase (320 aa).

Carboxy-S-adenosyl-L-methionine contacts are provided by residues Lys89, Trp103, Lys108, Gly128, 150 to 152 (DPT), 179 to 180 (IE), Met194, Tyr198, and Arg313.

Belongs to the class I-like SAM-binding methyltransferase superfamily. CmoB family. Homotetramer.

It carries out the reaction carboxy-S-adenosyl-L-methionine + 5-hydroxyuridine(34) in tRNA = 5-carboxymethoxyuridine(34) in tRNA + S-adenosyl-L-homocysteine + H(+). Functionally, catalyzes carboxymethyl transfer from carboxy-S-adenosyl-L-methionine (Cx-SAM) to 5-hydroxyuridine (ho5U) to form 5-carboxymethoxyuridine (cmo5U) at position 34 in tRNAs. This chain is tRNA U34 carboxymethyltransferase, found in Actinobacillus pleuropneumoniae serotype 7 (strain AP76).